The sequence spans 504 residues: 6,7,8-trihydroxycoumarin synthase (504 aa).

A helical membrane pass occupies residues 1–21; the sequence is MEPVFLFLILAFPIASVYLLF. A substrate specificity region spans residues 363 to 368; it reads PAPVLV. C444 provides a ligand contact to heme.

This sequence belongs to the cytochrome P450 family. Heme serves as cofactor.

It localises to the microsome membrane. It participates in secondary metabolite biosynthesis. Its function is as follows. Involved in the biosynthesis of coumarins and furanocoumarins (FCs), natural products required for defense responses against attacks by predators with potential medical and agroindustrial usages such as anticoagulant, rodenticide and artificial vanilla substitutes. Able to catalyze the hydroxylation of esculetin to produce 6,7,8-trihydroxycoumarin. This is 6,7,8-trihydroxycoumarin synthase from Pastinaca sativa (Wild parsnip).